Reading from the N-terminus, the 89-residue chain is Small ribosomal subunit protein uS17 (89 aa).

The protein belongs to the universal ribosomal protein uS17 family. In terms of assembly, part of the 30S ribosomal subunit.

One of the primary rRNA binding proteins, it binds specifically to the 5'-end of 16S ribosomal RNA. The polypeptide is Small ribosomal subunit protein uS17 (Chlorobium chlorochromatii (strain CaD3)).